The primary structure comprises 333 residues: Taste receptor type 2 member 123 (333 aa).

Residues 1 to 13 are Extracellular-facing; the sequence is MFSQKINYSHLFT. Asn7 carries N-linked (GlcNAc...) asparagine glycosylation. Residues 14–34 traverse the membrane as a helical segment; the sequence is FSITLYVEIVTGILGHGFIAL. Residues 35–60 lie on the Cytoplasmic side of the membrane; that stretch reads VNIMDWVKRRRISSVDQILTALALTR. A helical membrane pass occupies residues 61-81; the sequence is FIYVLSMLICILLFMLCPHLP. Topologically, residues 82–90 are extracellular; the sequence is RRSEMLSAM. The helical transmembrane segment at 91-111 threads the bilayer; it reads GIFWVVNSHFSIWLTTCLGVF. Topologically, residues 112–134 are cytoplasmic; sequence YFLKIANFSNSFFLYLKWRVKKV. Residues 135–155 traverse the membrane as a helical segment; it reads ILIIILASLIFLTLHILSLGI. Topologically, residues 156-205 are extracellular; the sequence is YDQFSIAAYVGNMSYSLTDLTQFSSTFLFSNSSNVFLITNSSHVFLPINS. Residues Asn167, Asn186, and Asn195 are each glycosylated (N-linked (GlcNAc...) asparagine). Residues 206–226 traverse the membrane as a helical segment; it reads LFMLIPFTVSLVAFLMLIFSL. Topologically, residues 227 to 253 are cytoplasmic; the sequence is WKHHKKMQVNAKQPRDVSTMAHIKALQ. A helical transmembrane segment spans residues 254 to 274; sequence TVFSFLLLYAIYLLFLIIGIL. The Extracellular portion of the chain corresponds to 275 to 281; it reads NLGLMEK. Residues 282–302 form a helical membrane-spanning segment; sequence IVILIFDHISGAVFPISHSFV. At 303-333 the chain is on the cytoplasmic side; sequence LILGNSKLRQASLSVLPCLRCQSKDMDTMGL.

It belongs to the G-protein coupled receptor T2R family. Expressed in subsets of taste receptor cells of the tongue and palate epithelium and exclusively in gustducin-positive cells. Expressed in the duodenum, antrum and fundus (part of the stomach).

The protein localises to the membrane. Functionally, gustducin-coupled receptor implicated in the perception of bitter compounds in the oral cavity and the gastrointestinal tract. Signals through PLCB2 and the calcium-regulated cation channel TRPM5. The sequence is that of Taste receptor type 2 member 123 (Tas2r123) from Mus musculus (Mouse).